A 457-amino-acid chain; its full sequence is Casein kinase 1-like protein 11 (457 aa).

The Protein kinase domain occupies phenylalanine 15–isoleucine 284. Residues leucine 21–leucine 29 and lysine 44 contribute to the ATP site. Residue aspartate 134 is the Proton acceptor of the active site. Disordered stretches follow at residues glycine 305–leucine 337 and asparagine 352–isoleucine 442. Over residues arginine 311–proline 324 the composition is skewed to pro residues. Polar residues-rich tracts occupy residues asparagine 383 to proline 403 and serine 409 to glutamate 429.

It belongs to the protein kinase superfamily. CK1 Ser/Thr protein kinase family. Casein kinase I subfamily. Monomer. Autophosphorylated.

The protein resides in the cytoplasm. The protein localises to the nucleus. It carries out the reaction L-seryl-[protein] + ATP = O-phospho-L-seryl-[protein] + ADP + H(+). The catalysed reaction is L-threonyl-[protein] + ATP = O-phospho-L-threonyl-[protein] + ADP + H(+). With respect to regulation, partially inhibited by N-(2-aminoethyl)-5-chloroisoquinoline-8-sulfonamide (CKI-7). Casein kinases are operationally defined by their preferential utilization of acidic proteins such as caseins as substrates. Can phosphorylate casein, phosvitin, myosin light chains and poly(Glu,Tyr) in vitro. In Arabidopsis thaliana (Mouse-ear cress), this protein is Casein kinase 1-like protein 11.